The following is a 208-amino-acid chain: Small ribosomal subunit protein uS4 (208 aa).

Positions 95–157 constitute an S4 RNA-binding domain; it reads RRIDNVVYRA…DRLKKLVRSN (63 aa).

This sequence belongs to the universal ribosomal protein uS4 family. As to quaternary structure, part of the 30S ribosomal subunit. Contacts protein S5. The interaction surface between S4 and S5 is involved in control of translational fidelity.

Functionally, one of the primary rRNA binding proteins, it binds directly to 16S rRNA where it nucleates assembly of the body of the 30S subunit. With S5 and S12 plays an important role in translational accuracy. This is Small ribosomal subunit protein uS4 from Borrelia turicatae (strain 91E135).